Here is a 1562-residue protein sequence, read N- to C-terminus: Neuralized-like protein 4 (1562 aa).

The segment covering 1-42 has biased composition (gly residues); the sequence is MAAGSGGSGGSGGGPGPGPGGGGGPSGSGSGPGSNGGLGSGG. Disordered regions lie at residues 1–48 and 207–236; these read MAAG…HPRT and PEPG…LAEQ. NHR domains lie at 41 to 207 and 317 to 484; these read GGEL…VLPP and ALLF…IVHN. Over residues 207–224 the composition is skewed to pro residues; it reads PEPGFSPPTPIPTPPLEP. A Phosphoserine modification is found at serine 502. NHR domains are found at residues 520–686 and 716–884; these read RLLF…IVDD and DLRF…ITNA. The tract at residues 691–716 is disordered; sequence PVPEPLPEGNNQVSPSSPSSGAGGSD. Phosphoserine is present on serine 907. The region spanning 913 to 1086 is the NHR 5 domain; the sequence is AHRFHSTCGK…PVRGVSIVSS (174 aa). Residues 1086 to 1123 form a disordered region; it reads STRLEESEGTQPPSPSSDTGSEGEEDDEGEEHGLGGQN. Residues 1106–1115 show a composition bias toward acidic residues; that stretch reads SEGEEDDEGE. Residues 1131–1294 form the NHR 6 domain; that stretch reads TLEFLENHGK…QCEQVTIVNP (164 aa).

In terms of assembly, interacts with CCP110; this interaction propmotes CCP110 ubiquitination and degradation via the proteasome pathway. Via its interaction with CCP110, may indirectly interact with CEP97. Interacts with the E3 ubiquitin-protein ligase HERC2 and UBE3A. May interact with MAPK6 and hence mediate MAPK6 interaction with UBE3A. Interaction with UBE3A may be indirect and mediated by HERC2. Ubiquitinated; undergoes HERC2-dependent 'Lys-48' ubiquitination. This ubiquitination leads to proteasomal degradation. Widely expressed at high levels (including brain).

Its subcellular location is the cytoplasm. The protein resides in the cytoskeleton. It localises to the microtubule organizing center. It is found in the centrosome. The protein localises to the centriole. Functionally, promotes CCP110 ubiquitination and proteasome-dependent degradation. By counteracting accumulation of CP110, maintains normal centriolar homeostasis and preventing formation of ectopic microtubular organizing centers. This is Neuralized-like protein 4 (NEURL4) from Homo sapiens (Human).